The sequence spans 223 residues: MSDDHFDDEQEGSSGGPRHPMAARFRGYLPVVVDVETGGFNSATDALLEIAATTIGMDEKGFVFPEHTYFFRVEPFEGANIEAAALEFTGIKLDHPLRMAVSEETALTDIFRGVRKALKANGCKRAILVGHNSSFDLGFLNAAVARLDMKRNPFHPFSSFDTATLAGLAYGQTVLAKACQSADIDFDGREAHSARYDTEKTAELFCGIVNRWKQMGGWQDFDD.

Residues 1–11 show a composition bias toward acidic residues; it reads MSDDHFDDEQE. A disordered region spans residues 1-21; it reads MSDDHFDDEQEGSSGGPRHPM. One can recognise an Exonuclease domain in the interval 31–205; the sequence is VVVDVETGGF…YDTEKTAELF (175 aa). Residues Asp34, Glu36, His192, and Asp197 each contribute to the Mg(2+) site. The active-site Proton donor/acceptor is His192.

The protein belongs to the RNase T family. In terms of assembly, homodimer. The cofactor is Mg(2+).

Trims short 3' overhangs of a variety of RNA species, leaving a one or two nucleotide 3' overhang. Responsible for the end-turnover of tRNA: specifically removes the terminal AMP residue from uncharged tRNA (tRNA-C-C-A). Also appears to be involved in tRNA biosynthesis. The protein is Ribonuclease T of Pseudomonas fluorescens (strain ATCC BAA-477 / NRRL B-23932 / Pf-5).